A 146-amino-acid polypeptide reads, in one-letter code: ATP synthase epsilon chain 2 (146 aa).

It belongs to the ATPase epsilon chain family. In terms of assembly, F-type ATPases have 2 components, CF(1) - the catalytic core - and CF(0) - the membrane proton channel. CF(1) has five subunits: alpha(3), beta(3), gamma(1), delta(1), epsilon(1). CF(0) has three main subunits: a, b and c.

The protein localises to the cell inner membrane. Produces ATP from ADP in the presence of a proton gradient across the membrane. This Cereibacter sphaeroides (strain ATCC 17023 / DSM 158 / JCM 6121 / CCUG 31486 / LMG 2827 / NBRC 12203 / NCIMB 8253 / ATH 2.4.1.) (Rhodobacter sphaeroides) protein is ATP synthase epsilon chain 2.